The following is a 156-amino-acid chain: Cytochrome c-type biogenesis protein CcmE 1 (156 aa).

Over 1–8 (MNATRKQR) the chain is Cytoplasmic. Residues 9-29 (LWLVIGVLTAAALAVTLIALA) traverse the membrane as a helical; Signal-anchor for type II membrane protein segment. The Periplasmic segment spans residues 30 to 156 (LQRNMSYLFT…AAAAPLSGVR (127 aa)). Residues histidine 123 and tyrosine 127 each contribute to the heme site.

The protein belongs to the CcmE/CycJ family.

The protein resides in the cell inner membrane. In terms of biological role, heme chaperone required for the biogenesis of c-type cytochromes. Transiently binds heme delivered by CcmC and transfers the heme to apo-cytochromes in a process facilitated by CcmF and CcmH. The polypeptide is Cytochrome c-type biogenesis protein CcmE 1 (Xanthomonas campestris pv. campestris (strain 8004)).